Here is a 192-residue protein sequence, read N- to C-terminus: Lipid A acyltransferase PagP (192 aa).

Positions 1–26 (MTVVNKSFLTFLVFFCQILFPLNASA) are cleaved as a signal peptide. Catalysis depends on residues His64, Asp107, and Ser108.

This sequence belongs to the lipid A palmitoyltransferase family. Homodimer.

The protein localises to the cell outer membrane. The catalysed reaction is a lipid A + a 1,2-diacyl-sn-glycero-3-phosphocholine = a hepta-acyl lipid A + a 2-acyl-sn-glycero-3-phosphocholine. It catalyses the reaction a lipid IVA + a 1,2-diacyl-sn-glycero-3-phosphocholine = a lipid IVB + a 2-acyl-sn-glycero-3-phosphocholine. The enzyme catalyses a lipid IIA + a 1,2-diacyl-sn-glycero-3-phosphocholine = a lipid IIB + a 2-acyl-sn-glycero-3-phosphocholine. Functionally, transfers a fatty acid residue from the sn-1 position of a phospholipid to the N-linked hydroxyfatty acid chain on the proximal unit of lipid A or its precursors. The protein is Lipid A acyltransferase PagP of Cronobacter turicensis (strain DSM 18703 / CCUG 55852 / LMG 23827 / z3032).